The following is a 203-amino-acid chain: Small ribosomal subunit protein uS4c (203 aa).

The 59-residue stretch at 92–150 (MRLDNIIYRLGMAPTIANARQLVNHGHIVVNDRIVTIPSYRCKPKDIISVRNNSTSRNV) folds into the S4 RNA-binding domain.

Belongs to the universal ribosomal protein uS4 family. As to quaternary structure, part of the 30S ribosomal subunit. Contacts protein S5. The interaction surface between S4 and S5 is involved in control of translational fidelity.

It is found in the plastid. It localises to the chloroplast. Its function is as follows. One of the primary rRNA binding proteins, it binds directly to 16S rRNA where it nucleates assembly of the body of the 30S subunit. In terms of biological role, with S5 and S12 plays an important role in translational accuracy. The chain is Small ribosomal subunit protein uS4c (rps4) from Chlorokybus atmophyticus (Soil alga).